A 168-amino-acid polypeptide reads, in one-letter code: Troponin I, cardiac muscle (168 aa).

Over residues 128 to 147 (VRKDDAEKESREVGDWRKNV) the composition is skewed to basic and acidic residues. Positions 128–168 (VRKDDAEKESREVGDWRKNVDALSGMEGRKKKFEAPGGGQG) are disordered.

Belongs to the troponin I family. In terms of assembly, binds to actin and tropomyosin.

Its function is as follows. Troponin I is the inhibitory subunit of troponin, the thin filament regulatory complex which confers calcium-sensitivity to striated muscle actomyosin ATPase activity. The polypeptide is Troponin I, cardiac muscle (TNNI3) (Gallus gallus (Chicken)).